Here is a 500-residue protein sequence, read N- to C-terminus: Glycerol kinase (500 aa).

Position 16 (T16) interacts with ADP. Positions 16 and 17 each coordinate ATP. T16 provides a ligand contact to sn-glycerol 3-phosphate. R20 provides a ligand contact to ADP. The sn-glycerol 3-phosphate site is built by R86, E87, Y138, and D243. Positions 86, 87, 138, 243, and 244 each coordinate glycerol. Positions 265 and 313 each coordinate ADP. ATP contacts are provided by T265, G313, Q317, and G414. Positions 414 and 418 each coordinate ADP.

Belongs to the FGGY kinase family.

It carries out the reaction glycerol + ATP = sn-glycerol 3-phosphate + ADP + H(+). It functions in the pathway polyol metabolism; glycerol degradation via glycerol kinase pathway; sn-glycerol 3-phosphate from glycerol: step 1/1. Its activity is regulated as follows. Inhibited by fructose 1,6-bisphosphate (FBP). Key enzyme in the regulation of glycerol uptake and metabolism. Catalyzes the phosphorylation of glycerol to yield sn-glycerol 3-phosphate. This chain is Glycerol kinase, found in Trichormus variabilis (strain ATCC 29413 / PCC 7937) (Anabaena variabilis).